The following is a 322-amino-acid chain: tRNA (guanine-N(7)-)-methyltransferase (322 aa).

S-adenosyl-L-methionine is bound by residues Glu29, Glu55, and Asp105. Asp105 is an active-site residue. Positions 109 and 141 each coordinate substrate.

Belongs to the class I-like SAM-binding methyltransferase superfamily. TrmB family.

The catalysed reaction is guanosine(46) in tRNA + S-adenosyl-L-methionine = N(7)-methylguanosine(46) in tRNA + S-adenosyl-L-homocysteine. It participates in tRNA modification; N(7)-methylguanine-tRNA biosynthesis. Catalyzes the formation of N(7)-methylguanine at position 46 (m7G46) in tRNA. The protein is tRNA (guanine-N(7)-)-methyltransferase of Deinococcus radiodurans (strain ATCC 13939 / DSM 20539 / JCM 16871 / CCUG 27074 / LMG 4051 / NBRC 15346 / NCIMB 9279 / VKM B-1422 / R1).